A 340-amino-acid polypeptide reads, in one-letter code: Glycerol-3-phosphate dehydrogenase [NAD(P)+] (340 aa).

Residues Ser-14, Phe-15, Arg-35, and Lys-108 each contribute to the NADPH site. Sn-glycerol 3-phosphate is bound by residues Lys-108 and Gly-136. Ala-140 contributes to the NADPH binding site. The sn-glycerol 3-phosphate site is built by Lys-191, Asp-244, Ser-254, Arg-255, and Asn-256. Catalysis depends on Lys-191, which acts as the Proton acceptor. Arg-255 contacts NADPH. Glu-281 contributes to the NADPH binding site.

The protein belongs to the NAD-dependent glycerol-3-phosphate dehydrogenase family.

It is found in the cytoplasm. It carries out the reaction sn-glycerol 3-phosphate + NAD(+) = dihydroxyacetone phosphate + NADH + H(+). It catalyses the reaction sn-glycerol 3-phosphate + NADP(+) = dihydroxyacetone phosphate + NADPH + H(+). It functions in the pathway membrane lipid metabolism; glycerophospholipid metabolism. Functionally, catalyzes the reduction of the glycolytic intermediate dihydroxyacetone phosphate (DHAP) to sn-glycerol 3-phosphate (G3P), the key precursor for phospholipid synthesis. The protein is Glycerol-3-phosphate dehydrogenase [NAD(P)+] of Pseudomonas aeruginosa (strain LESB58).